The chain runs to 560 residues: Membrane protein insertase YidC (560 aa).

Residues 1–21 (MDIKRTILIAALAVVSYVMVL) form a helical membrane-spanning segment. The tract at residues 42-66 (VAPGLPDGVPAGNNGASADVPSANA) is disordered. The next 5 membrane-spanning stretches (helical) occupy residues 341–361 (LELTVDYGFLWFIAQPIFWLL), 367–387 (LLGNWGWSIIVLTMLIKGLFF), 437–457 (LGGCLPILVQMPVFLALYWVL), 468–488 (WILWITDLSIKDPFFILPIIM), and 515–535 (PIIFTFFFLWFPAGLVLYWVV).

This sequence belongs to the OXA1/ALB3/YidC family. Type 1 subfamily. As to quaternary structure, interacts with the Sec translocase complex via SecD. Specifically interacts with transmembrane segments of nascent integral membrane proteins during membrane integration.

Its subcellular location is the cell inner membrane. Functionally, required for the insertion and/or proper folding and/or complex formation of integral membrane proteins into the membrane. Involved in integration of membrane proteins that insert both dependently and independently of the Sec translocase complex, as well as at least some lipoproteins. Aids folding of multispanning membrane proteins. This chain is Membrane protein insertase YidC, found in Pseudomonas putida (strain ATCC 47054 / DSM 6125 / CFBP 8728 / NCIMB 11950 / KT2440).